A 247-amino-acid polypeptide reads, in one-letter code: MVIAGVSPPTPSSENLLQEHEEKHFTATDVVRDVIIGVSDGLTVPFALAAGLSGANVPSSLILTAGIAEVAAGAISMGLGGYLAAKSEEDHYMRELKREQEEIINVPDVEAAEIGEILAQYGLEPHVYNPVVNSLRKNPQAWLDFMMKFELGLEKPEPRRALESAMTIALAYVVGGLVPLSPYFFIPFAKQAMITSIAVTLLALVVFGYIKGRFTGSNPVLSSIQTAIIGALASAAAYAMAKAVQSV.

The Cytoplasmic portion of the chain corresponds to 1 to 33 (MVIAGVSPPTPSSENLLQEHEEKHFTATDVVRD). Residues 34 to 54 (VIIGVSDGLTVPFALAAGLSG) traverse the membrane as a helical segment. Topologically, residues 55–60 (ANVPSS) are vacuolar. Residues 61 to 81 (LILTAGIAEVAAGAISMGLGG) traverse the membrane as a helical segment. The Cytoplasmic portion of the chain corresponds to 82–167 (YLAAKSEEDH…PRRALESAMT (86 aa)). E99, E102, E110, E113, M146, and E150 together coordinate Fe cation. Residues 168–188 (IALAYVVGGLVPLSPYFFIPF) form a helical membrane-spanning segment. The Vacuolar segment spans residues 189–191 (AKQ). The chain crosses the membrane as a helical span at residues 192–212 (AMITSIAVTLLALVVFGYIKG). Residues 213 to 219 (RFTGSNP) are Cytoplasmic-facing. Residues 220 to 240 (VLSSIQTAIIGALASAAAYAM) traverse the membrane as a helical segment. The Vacuolar portion of the chain corresponds to 241–247 (AKAVQSV).

It belongs to the CCC1 family. As to expression, expressed at high levels in the blue epidermal cells of the inner bottom part of the petal (at protein level). No detectable expression in parenchyma and epidermis of the purple segments of the petal, parenchyma of the blue segments, leaf, stem, bulb and root (at protein level). High levels of mRNA in the blue epidermal cells of the inner bottom part of the petal. Low-levels of mRNA in the purple segments of the petal, stem, leaf, root, bulb and pistil.

Its subcellular location is the vacuole membrane. The catalysed reaction is Fe(2+)(in) = Fe(2+)(out). Functionally, vacuolar iron transporter involved in the transfer of iron ions from the cytosol to the vacuole for intracellular iron storage. Plays an essential role in the development of blue coloration in tulip petals most likely due to the accumulation of ferrous ions that can form complexes with anthocyanins. The polypeptide is Vacuolar iron transporter 1 (Tulipa gesneriana (Garden tulip)).